A 916-amino-acid chain; its full sequence is Major intrinsically disordered Notch2-binding receptor 1 (916 aa).

Over 1–891 (METSQETSLF…AEFRRAKVCK (891 aa)) the chain is Cytoplasmic. 5 disordered regions span residues 390 to 409 (EEKL…PAPE), 553 to 591 (KSDC…SEEE), 648 to 675 (SLTS…GPKL), 705 to 726 (TRPS…IASI), and 745 to 782 (NEEE…LPKQ). Composition is skewed to basic and acidic residues over residues 553-564 (KSDCDSSPEHNL) and 575-591 (KGDK…SEEE). S711 carries the phosphoserine modification. Residues 750–771 (KDTGPGDNKDWHRKSKEADRQY) show a composition bias toward basic and acidic residues. Residues 892–912 (IAALIAAAACTVILVIVVPIC) traverse the membrane as a helical segment. The Extracellular segment spans residues 913-916 (TMKS).

This sequence belongs to the MINAR family. In terms of assembly, interacts with NOTCH2; this interaction increases MINAR1 stability. Interacts (via N-terminus) with DEPTOR (via PDZ domain); this interaction may stabilize DEPTOR protein by impairing its ubiquitination. Widely expressed, including in breast epithelial cells and endothelial cells (at protein level). Expression is down-regulated in advanced breast tumors (at protein level).

The protein localises to the cell membrane. In terms of biological role, intrinsically disordered protein which may negatively regulate mTOR signaling pathway by stabilizing the mTOR complex component DEPTOR. Negatively regulates angiogenesis. Negatively regulates cell growth. Negatively regulates neurite outgrowth in hippocampal neurons. In Homo sapiens (Human), this protein is Major intrinsically disordered Notch2-binding receptor 1.